The chain runs to 105 residues: MKLRHLLLGAGLGICTAVVVRQYVMKPYISSEKALRIVKSAFKQRGPIDGSWIYTQPEPYNINGETVQVYKTGITRSAFGELEQYEVMVDAKTGEIVDVIDTIAS.

This is an uncharacterized protein from Bacillus subtilis (strain 168).